A 426-amino-acid polypeptide reads, in one-letter code: MKRDDLIFDIIEKEHQRQLKGIELIASENFVSDQVMEAMGSCLTNKYAEGYPGKRYYGGCEVVDQSEQIAIDRLKEIFGAEWANVQPHSGAQANAAVFLAVLNPGDKFMGLNLAHGGHLSHGSLVNTSGIIYTPCEYNLKQETGRVDYDQMEEVALREKPKMIIGGGSAYSREWDYKRMREIADKVGAILMIDMAHPAGLIAAGLLDNPVKYAHIVTSTTHKTLRGPRGGVIMMGKDFPNPWGKKTPKGEIKMMSQLLDSAVFPGIQGGPLEHVIAAKAVAFGECLQPEYKEYQKQVQKNAAVLAQALIDRGFTIVSGGTDNHSMLVDLRSKYPTLTGKVAEKALVSADITVNKNMVPFDSRSAFQTSGIRLGTPAITTRGAKEDLMLEIAEMIETVLSNVENEEVIAQVRARVNKTMEKYPIFAY.

Residues L113 and 117–119 (GHL) contribute to the (6S)-5,6,7,8-tetrahydrofolate site. Position 222 is an N6-(pyridoxal phosphate)lysine (K222). 363-365 (SAF) contacts (6S)-5,6,7,8-tetrahydrofolate.

It belongs to the SHMT family. Homodimer. Pyridoxal 5'-phosphate is required as a cofactor.

Its subcellular location is the cytoplasm. The catalysed reaction is (6R)-5,10-methylene-5,6,7,8-tetrahydrofolate + glycine + H2O = (6S)-5,6,7,8-tetrahydrofolate + L-serine. Its pathway is one-carbon metabolism; tetrahydrofolate interconversion. The protein operates within amino-acid biosynthesis; glycine biosynthesis; glycine from L-serine: step 1/1. Its function is as follows. Catalyzes the reversible interconversion of serine and glycine with tetrahydrofolate (THF) serving as the one-carbon carrier. This reaction serves as the major source of one-carbon groups required for the biosynthesis of purines, thymidylate, methionine, and other important biomolecules. Also exhibits THF-independent aldolase activity toward beta-hydroxyamino acids, producing glycine and aldehydes, via a retro-aldol mechanism. The protein is Serine hydroxymethyltransferase of Bacteroides fragilis (strain ATCC 25285 / DSM 2151 / CCUG 4856 / JCM 11019 / LMG 10263 / NCTC 9343 / Onslow / VPI 2553 / EN-2).